A 513-amino-acid chain; its full sequence is Glycine/sarcosine/betaine reductase complex component C subunit beta (513 aa).

Heterooctamer of four alpha and four beta subunits. Component of the glycine, sarcosine and betaine reductase complexes, together with proteins A and B.

It carries out the reaction acetyl phosphate + [thioredoxin]-disulfide + NH4(+) + H2O = [thioredoxin]-dithiol + glycine + phosphate + H(+). The enzyme catalyses acetyl phosphate + methylamine + [thioredoxin]-disulfide + H2O = sarcosine + [thioredoxin]-dithiol + phosphate + H(+). The catalysed reaction is acetyl phosphate + trimethylamine + [thioredoxin]-disulfide + H2O = glycine betaine + [thioredoxin]-dithiol + phosphate + H(+). Its function is as follows. In the first step of glycine, betaine and sarcosine reductases, the substrate is bound to component PB via a Schiff base intermediate. Then the PB-activated substrate is nucleophilically attacked by the selenol anion of component PA to transform it to a carboxymethylated selenoether and the respective amine. By action of component PC, acetyl phosphate is formed, leaving component PA in its oxidized state. Finally component PA becomes reduced by the thioredoxin system to start a new catalytic cycle of reductive deamination. The polypeptide is Glycine/sarcosine/betaine reductase complex component C subunit beta (grdC) (Peptoclostridium acidaminophilum (Eubacterium acidaminophilum)).